We begin with the raw amino-acid sequence, 561 residues long: MTHLKITGMTCDSCAAHVKEALEKVPGVQSALVSYPKGTAQLAIVPGTSPDALTAAVAGLGYKATLADAPLADNRVGLLDKVRGWMAAAEKHSGNEPPVQVAVIGSGGAAMAAALKAVEQGAQVTLIERGTIGGTCVNVGCVPSKIMIRAAHIAHLRRESPFDGGIAATVPTIDRSKLLAQQQARVDELRHAKYEGILGGNPAITVVHGEARFKDDQSLTVRLNEGGERVVMFDRCLVATGASPAVPPIPGLKESPYWTSTEALASDTIPERLAVIGSSVVALELAQAFARLGSKVTVLARNTLFFREDPAIGEAVTAAFRAEGIEVLEHTQASQVAHMDGEFVLTTTHGELRADKLLVATGRTPNTRSLALDAAGVTVNAQGAIVIDQGMRTSNPNIYAAGDCTDQPQFVYVAAAAGTRAAINMTGGDAALDLTAMPAVVFTDPQVATVGYSEAEAHHDGIETDSRTLTLDNVPRALANFDTRGFIKLVIEEGSHRLIGVQAVAPEAGELIQTAALAIRNRMTVQELADQLFPYLTMVEGLKLAAQTFNKDVKQLSCCAG.

In terms of domain architecture, HMA spans 2 to 65 (THLKITGMTC…AVAGLGYKAT (64 aa)). Residues Cys-11 and Cys-14 each contribute to the a metal cation site. FAD-binding residues include Ala-110, Gly-130, and Thr-135. The cysteines at positions 136 and 141 are disulfide-linked. FAD is bound by residues Lys-145, Ala-211, Asp-403, and Val-411. Hg(2+) contacts are provided by Cys-558 and Cys-559.

This sequence belongs to the class-I pyridine nucleotide-disulfide oxidoreductase family. In terms of assembly, homodimer. FAD serves as cofactor.

The catalysed reaction is Hg + NADP(+) + H(+) = Hg(2+) + NADPH. Functionally, resistance to Hg(2+) in bacteria appears to be governed by a specialized system which includes mercuric reductase. MerA protein is responsible for volatilizing mercury as Hg(0). Plays a pivotal role in mercury resistance under thiol-depleted conditions and cell protection. Protects cells under thiol-depleted conditions. The protein is Mercuric reductase (merA) of Pseudomonas aeruginosa.